The primary structure comprises 96 residues: Protein Vpr (96 aa).

Residues 1-42 form a homooligomerization region; that stretch reads MEQAPADQGPQREPHNEWTLELLEELKQEAVRHFPRIWLHSL. Serine 79, serine 94, and serine 96 each carry phosphoserine; by host.

This sequence belongs to the HIV-1 VPR protein family. Homooligomer, may form homodimer. Interacts with p6-gag region of the Pr55 Gag precursor protein through a (Leu-X-X)4 motif near the C-terminus of the P6gag protein. Interacts with host UNG. May interact with host RAD23A/HHR23A. Interacts with host VPRBP/DCAF1, leading to hijack the CUL4A-RBX1-DDB1-DCAF1/VPRBP complex, mediating ubiquitination of host proteins such as TERT and ZGPAT and arrest of the cell cycle in G2 phase. Post-translationally, phosphorylated on several residues by host. These phosphorylations regulate VPR activity for the nuclear import of the HIV-1 pre-integration complex.

The protein localises to the virion. It is found in the host nucleus. Its subcellular location is the host extracellular space. In terms of biological role, during virus replication, may deplete host UNG protein, and incude G2-M cell cycle arrest. Acts by targeting specific host proteins for degradation by the 26S proteasome, through association with the cellular CUL4A-DDB1 E3 ligase complex by direct interaction with host VPRPB/DCAF-1. Cell cycle arrest reportedly occurs within hours of infection and is not blocked by antiviral agents, suggesting that it is initiated by the VPR carried into the virion. Additionally, VPR induces apoptosis in a cell cycle dependent manner suggesting that these two effects are mechanistically linked. Detected in the serum and cerebrospinal fluid of AIDS patient, VPR may also induce cell death to bystander cells. Its function is as follows. During virus entry, plays a role in the transport of the viral pre-integration (PIC) complex to the host nucleus. This function is crucial for viral infection of non-dividing macrophages. May act directly at the nuclear pore complex, by binding nucleoporins phenylalanine-glycine (FG)-repeat regions. In Homo sapiens (Human), this protein is Protein Vpr.